Here is a 158-residue protein sequence, read N- to C-terminus: Small ribosomal subunit protein uS15 (158 aa).

Positions 1 to 10 (MARMHTRRRG) are enriched in basic residues. A disordered region spans residues 1–66 (MARMHTRRRG…EGVKGTPIPD (66 aa)). Positions 21–32 (DPPEWSDIDADA) are enriched in acidic residues. Residues 33-45 (IEERVVELAEQGH) are compositionally biased toward basic and acidic residues.

Belongs to the universal ribosomal protein uS15 family. In terms of assembly, part of the 30S ribosomal subunit.

The protein is Small ribosomal subunit protein uS15 of Haloquadratum walsbyi (strain DSM 16790 / HBSQ001).